We begin with the raw amino-acid sequence, 524 residues long: MSPVEVSNVFDTILVLDFGSQYSHLITRRLREFNVYAEMLPCTQKIADLHWKPKGVILSGGPYSVYEKDAPHVDKAIFDLGVPILGICYGLQEIAWINNTEVGRGEKREYGPATLRVEDKSCPLFANVDHSTVWMSHHDKVHNLPAGFKITATSENSPFCGIANEDKQIYGIQFHPEVTHSTQGKTLLRNFAVDICKASQSWNMENFIDTEINRIRELVGPDAEVIGAVSGGVDSTVAAKLMDRAIGDRFHAIMVDNGVLRLNEAATVKKTLGEGLGINLTVVDASDEFLDKLKGVTDPEKKRKIIGNTFIHVFEREAAKIQPKNGKEIEFLLQGTLYPDVIESISFKGPSQTIKTHHNVGGLLENMKLKLIEPLRELFKDEVRELGELLGISHELVWRHPFPGPGIAIRVLGEVTREQVAIARKADYIYIEEIRKAGLYNNISQAFACLLPVKSVGVMGDQRTYEQVIALRAIETTDFMTADWYPFEHSFLKKVASRIVNEVDGVARVTYDITSKPPATVEWE.

The Glutamine amidotransferase type-1 domain occupies 12–201 (TILVLDFGSQ…AVDICKASQS (190 aa)). The active-site Nucleophile is Cys-88. Catalysis depends on residues His-175 and Glu-177. Residues 202–399 (WNMENFIDTE…LGISHELVWR (198 aa)) enclose the GMPS ATP-PPase domain. 230 to 236 (SGGVDST) contacts ATP. XMP is bound by residues Arg-303, Asp-461, Lys-516, and Glu-522.

In terms of assembly, homodimer. Mg(2+) serves as cofactor.

Its subcellular location is the cytoplasm. The protein resides in the cytosol. It catalyses the reaction XMP + L-glutamine + ATP + H2O = GMP + L-glutamate + AMP + diphosphate + 2 H(+). It functions in the pathway purine metabolism; GMP biosynthesis; GMP from XMP (L-Gln route): step 1/1. Functionally, catalyzes the conversion of xanthine monophosphate (XMP) to GMP in the presence of glutamine and ATP through an adenyl-XMP intermediate. This Kluyveromyces lactis (strain ATCC 8585 / CBS 2359 / DSM 70799 / NBRC 1267 / NRRL Y-1140 / WM37) (Yeast) protein is GMP synthase [glutamine-hydrolyzing] (GUA1).